A 160-amino-acid chain; its full sequence is Transcription elongation factor GreA (160 aa).

Positions 10–37 (TLEGKAKLENELQELKTVKRKEVVERIK) form a coiled coil.

It belongs to the GreA/GreB family.

Its function is as follows. Necessary for efficient RNA polymerase transcription elongation past template-encoded arresting sites. The arresting sites in DNA have the property of trapping a certain fraction of elongating RNA polymerases that pass through, resulting in locked ternary complexes. Cleavage of the nascent transcript by cleavage factors such as GreA or GreB allows the resumption of elongation from the new 3'terminus. GreA releases sequences of 2 to 3 nucleotides. In Listeria welshimeri serovar 6b (strain ATCC 35897 / DSM 20650 / CCUG 15529 / CIP 8149 / NCTC 11857 / SLCC 5334 / V8), this protein is Transcription elongation factor GreA.